The primary structure comprises 382 residues: Galactokinase (382 aa).

34–37 (EHTD) provides a ligand contact to substrate. An ATP-binding site is contributed by 124 to 130 (GAGLSSS). Residues serine 130 and glutamate 162 each contribute to the Mg(2+) site. Catalysis depends on aspartate 174, which acts as the Proton acceptor. A substrate-binding site is contributed by tyrosine 223.

Belongs to the GHMP kinase family. GalK subfamily.

It is found in the cytoplasm. The enzyme catalyses alpha-D-galactose + ATP = alpha-D-galactose 1-phosphate + ADP + H(+). It functions in the pathway carbohydrate metabolism; galactose metabolism. Functionally, catalyzes the transfer of the gamma-phosphate of ATP to D-galactose to form alpha-D-galactose-1-phosphate (Gal-1-P). This is Galactokinase from Shigella flexneri serotype 5b (strain 8401).